The chain runs to 80 residues: Nuclear protein 1 (80 aa).

2 disordered regions span residues 1-21 and 38-80; these read MATLPPTANPSQQPLNLEDED and VGGG…KAWR. Residues 61 to 80 show a composition bias toward basic and acidic residues; the sequence is GHERKLLTKFQNSERKKAWR. The short motif at 64-80 is the Nuclear localization signal element; it reads RKLLTKFQNSERKKAWR.

This sequence belongs to the NUPR family. In terms of assembly, monomer. Directly interacts with MSL1 and binds MORF4L1, two components of histone acetyltransferase complex; the interaction with MORF4L1 may be mediated by MSL1. Interacts with EP300; this interaction enhances the effect of EP300 on PAX2 transcription factor activity. Interacts with PAXIP1; this interaction prevents PAXIP1 inhibition of PAX2 transcription factor activity. Interacts with COPS5; this interaction allows COPS5-dependent CDKN1B nuclear to cytoplasm translocation. Interacts with RNF2. Interacts with FOXO3; this interaction represses FOXO3 transactivation. Interacts with PTMA; regulates apoptotic process. Interacts with MYOD1, EP300 and DDX5; this interaction coordinates the association of anti-proliferative and pro-myogenic proteins at the myogenin promoter. Interacts with TP53; interaction is stress-dependent. Forms a complex with EP300 and TP53; this complex binds CDKN1A promoter leading to transcriptional induction of CDKN1A. In terms of processing, phosphorylated. Phosphorylation promotes DNA-binding activity. Post-translationally, acetylated. Highly expressed in pancreas and both ovaries and testes.

It is found in the nucleus. The protein resides in the cytoplasm. Its subcellular location is the perinuclear region. Its function is as follows. Transcription regulator that converts stress signals into a program of gene expression that empowers cells with resistance to the stress induced by a change in their microenvironment. Thereby participates in the regulation of many processes namely cell-cycle, apoptosis, autophagy and DNA repair responses. Controls cell cycle progression and protects cells from genotoxic stress induced by doxorubicin through the complex formation with TP53 and EP300 that binds CDKN1A promoter leading to transcriptional induction of CDKN1A. Protects pancreatic cancer cells from stress-induced cell death by binding the RELB promoter and activating its transcription, leading to IER3 transactivation. Negatively regulates apoptosis through interaction with PTMA. Inhibits autophagy-induced apoptosis in cardiac cells through FOXO3 interaction, inducing cytoplasmic translocation of FOXO3 thereby preventing the FOXO3 association with the pro-autophagic BNIP3 promoter. Inhibits cell growth and facilitates programmed cell death by apoptosis after adriamycin-induced DNA damage through transactivation of TP53. Regulates methamphetamine-induced apoptosis and autophagy through DDIT3-mediated endoplasmic reticulum stress pathway. Participates in DNA repair following gamma-irradiation by facilitating DNA access of the transcription machinery through interaction with MSL1 leading to inhibition of histone H4' Lys-16' acetylation (H4K16ac). Coactivator of PAX2 transcription factor activity, both by recruiting the EP300 cofactor to increase PAX2 transcription factor activity and by binding PAXIP1 to suppress PAXIP1-induced inhibition on PAX2. Positively regulates cell cycle progression through interaction with COPS5 inducing cytoplasmic translocation of CDKN1B leading to the CDKN1B degradation. Coordinates, through its interaction with EP300, the assiociation of MYOD1, EP300 and DDX5 to the MYOG promoter, leading to inhibition of cell-cycle progression and myogenic differentiation promotion. Negatively regulates beta cell proliferation via inhibition of cell-cycle regulatory genes expression through the suppression of their promoter activities. Also required for LHB expression and ovarian maturation. Exacerbates CNS inflammation and demyelination upon cuprizone treatment. This Mus musculus (Mouse) protein is Nuclear protein 1.